The chain runs to 309 residues: ADP,ATP carrier protein 1 (309 aa).

Solcar repeat units follow at residues 11–104 (SHFG…IKSL), 116–208 (KWFA…FKPV), and 216–302 (GSFV…LQLI). 5 helical membrane passes run 13 to 40 (FGVDFLMGGVSAAIAKTGAAPIERVKLL), 81 to 105 (TANVLRYFPTQALNFAFKDKIKSLL), 114 to 134 (YAKWFAGNLFSGGAAGGLSLL), 184 to 205 (FVPSVLGIIVYRGLYFGLYDSF), and 219 to 239 (VASFLLGWVITMGASTASYPL). Residues Arg-86 and Lys-98 each contribute to the ADP site. Residue Arg-243 participates in ADP binding. Positions 243–248 (RRRMMM) are important for transport activity. A Nucleotide carrier signature motif motif is present at residues 243–248 (RRRMMM). The helical transmembrane segment at 279-299 (CGANIFRGVAAAGVISLYDQL) threads the bilayer.

It belongs to the mitochondrial carrier (TC 2.A.29) family. In terms of assembly, monomer.

It localises to the mitochondrion inner membrane. The catalysed reaction is ADP(in) + ATP(out) = ADP(out) + ATP(in). With respect to regulation, the matrix-open state (m-state) is inhibited by the membrane-permeable bongkrekic acid (BKA). The cytoplasmic-open state (c-state) is inhibited by the membrane-impermeable toxic inhibitor carboxyatractyloside (CATR). In terms of biological role, ADP:ATP antiporter that mediates import of ADP into the mitochondrial matrix for ATP synthesis, and export of ATP out to fuel the cell. Cycles between the cytoplasmic-open state (c-state) and the matrix-open state (m-state): operates by the alternating access mechanism with a single substrate-binding site intermittently exposed to either the cytosolic (c-state) or matrix (m-state) side of the inner mitochondrial membrane. This chain is ADP,ATP carrier protein 1 (AAC1), found in Saccharomyces cerevisiae (strain ATCC 204508 / S288c) (Baker's yeast).